An 822-amino-acid polypeptide reads, in one-letter code: MPAPIRLRELIRTIRTARTQAEEREMIQKECAAIRSSFREEDNTYRCRNVAKLLYMHMLGYPAHFGQLECLKLIASQKFTDKRIGYLGAMLLLDERQDVHLLMTNCIKNDLNHSTQFVQGLALCTLGCMGSSEMCRDLAGEVEKLLKTSNSYLRKKAALCAVHVIRKVPELMEMFLPATKNLLNEKNHGVLHTSVVLLTEMCERSPDMPAHFRKLVPQLVRILKNLIMSGYSPEHDVSGISDPFLQVRILRLLRILGRNDDDSSEAMNDILAQVATNTETSKNVGNAILYETVLTIMDIKSESGLRVLAINILGRFLLNNDKNIRYVALTSLLKTVRTDHNTVQRHRSTIVDCLKDLDVSIKRRAMELSFALVNGNNIRGMMKELLYFLDSCEPEFKADCASGIFLAAEKYAPSKRWHIDTIMRVLTTAGSYVRDDAVPNLIQLITNSVEMHAYTVQRLYKAILGDYSQQPLVQVAAWCIGEYGDLLVSGQCEEEGPIQVTEDEVLDILESVLISNMSTSVTRGYALTAIMKLSTRFTCTVNRIKKVVSIYGSSIDVELQQRAVEYNALFKKYDHMRSALLERMPVMEKVTTNGPTEIVQTNGETEPAPLETKPPPSGPQPTSQANDLLDLLGGNDITPVIPTAPTSKPSSAGGELLDLLGDINLTGAPAAAPAPASVPQISQPPFLLDGLSSQPLFNDIAAGIPSITAYSKNGLKIEFTFERSNTNPSVTVITIQASNSTELDMTDFVFQAAVPKTFQLQLLSPSSSIVPAFNTGTITQVIKVLNPQKQQLRMRIKLTYNHKGSAMQDLAEVNNFPPQSWQ.

The disordered stretch occupies residues 597-628 (EIVQTNGETEPAPLETKPPPSGPQPTSQANDL). Positions 702–817 (AGIPSITAYS…QDLAEVNNFP (116 aa)) constitute a GAE domain.

It belongs to the adaptor complexes large subunit family. In terms of assembly, adaptor protein complex 1 (AP-1) is a heterotetramer composed of two large adaptins (gamma-type subunit AP1G1 and beta-type subunit AP1B1), a medium adaptin (mu-type subunit AP1M1 or AP1M2) and a small adaptin (sigma-type subunit AP1S1 or AP1S2 or AP1S3). Interacts (via GAE domain) with RABEP1. Interacts with EPS15. Interacts with SYNRG/gamma-synergin. Interacts (via GAE domain) with AP1AR (via coiled-coil domain). Interacts with CLN3 (via dileucine motif); this interaction facilitates lysosomal targeting. Interacts (via GAE domain) with AFTPH/aftiphilin; the interaction is required to recruit AFTPH/aftiphilin to the perinuclear region of the cell.

Its subcellular location is the golgi apparatus. The protein localises to the cytoplasmic vesicle. The protein resides in the clathrin-coated vesicle membrane. It is found in the cytoplasm. It localises to the perinuclear region. Its subcellular location is the clathrin-coated vesicle. The protein localises to the membrane. The protein resides in the clathrin-coated pit. In terms of biological role, subunit of clathrin-associated adaptor protein complex 1 that plays a role in protein sorting in the late-Golgi/trans-Golgi network (TGN) and/or endosomes. The AP complexes mediate both the recruitment of clathrin to membranes and the recognition of sorting signals within the cytosolic tails of transmembrane cargo molecules. In association with AFTPH/aftiphilin in the aftiphilin/p200/gamma-synergin complex, involved in the trafficking of transferrin from early to recycling endosomes, and the membrane trafficking of furin and the lysosomal enzyme cathepsin D between the trans-Golgi network (TGN) and endosomes. This is AP-1 complex subunit gamma-1 (AP1G1) from Pongo abelii (Sumatran orangutan).